A 327-amino-acid polypeptide reads, in one-letter code: Tagatose 1,6-diphosphate aldolase 2 (327 aa).

Belongs to the aldolase LacD family.

It catalyses the reaction D-tagatofuranose 1,6-bisphosphate = D-glyceraldehyde 3-phosphate + dihydroxyacetone phosphate. Its pathway is carbohydrate metabolism; D-tagatose 6-phosphate degradation; D-glyceraldehyde 3-phosphate and glycerone phosphate from D-tagatose 6-phosphate: step 2/2. The polypeptide is Tagatose 1,6-diphosphate aldolase 2 (Streptococcus pyogenes serotype M6 (strain ATCC BAA-946 / MGAS10394)).